Consider the following 316-residue polypeptide: Small ribosomal subunit biogenesis GTPase RsgA (316 aa).

A CP-type G domain is found at 83-248 (DQYKSKLFAA…LIDSPGFQEF (166 aa)). GTP contacts are provided by residues 131–134 (NKTD) and 185–193 (GQSGMGKST). Positions 272, 277, 279, and 285 each coordinate Zn(2+).

The protein belongs to the TRAFAC class YlqF/YawG GTPase family. RsgA subfamily. As to quaternary structure, monomer. Associates with 30S ribosomal subunit, binds 16S rRNA. Requires Zn(2+) as cofactor.

The protein resides in the cytoplasm. One of several proteins that assist in the late maturation steps of the functional core of the 30S ribosomal subunit. Helps release RbfA from mature subunits. May play a role in the assembly of ribosomal proteins into the subunit. Circularly permuted GTPase that catalyzes slow GTP hydrolysis, GTPase activity is stimulated by the 30S ribosomal subunit. The protein is Small ribosomal subunit biogenesis GTPase RsgA of Paraburkholderia xenovorans (strain LB400).